The primary structure comprises 165 residues: MARLALGAAYKTQNRKENSIAQYAYSYSLQQGIVDYEAVRVEQHKVGFSDQEKIGTDNIQQCVAVILHDPLTKKTALAHVDRFTYAGSLTHDVISNFPPNTQLEAYLVGGRDRSAVSISVSDGNIRKVTQELTNHFNVNIKSADIEDKGAPLGIIFDPITSNCSG.

This is an uncharacterized protein from Rickettsia conorii (strain ATCC VR-613 / Malish 7).